The sequence spans 466 residues: Glutamate decarboxylase alpha (466 aa).

The substrate site is built by threonine 62 and asparagine 83. Pyridoxal 5'-phosphate is bound by residues 126-127 (SS), threonine 212, and histidine 275. An N6-(pyridoxal phosphate)lysine modification is found at lysine 276.

The protein belongs to the group II decarboxylase family. In terms of assembly, homohexamer. It depends on pyridoxal 5'-phosphate as a cofactor.

The catalysed reaction is L-glutamate + H(+) = 4-aminobutanoate + CO2. Functionally, converts glutamate to gamma-aminobutyrate (GABA), consuming one intracellular proton in the reaction. The gad system helps to maintain a near-neutral intracellular pH when cells are exposed to extremely acidic conditions. The ability to survive transit through the acidic conditions of the stomach is essential for successful colonization of the mammalian host by commensal and pathogenic bacteria. This Escherichia coli O6:H1 (strain CFT073 / ATCC 700928 / UPEC) protein is Glutamate decarboxylase alpha (gadA).